Reading from the N-terminus, the 2301-residue chain is Genome polyprotein (2301 aa).

Residues 3-14 fold into a zinc finger; sequence CKHGYPDVCPIC. The acidic stretch occupies residues 30–46; sequence DGEWFPTDLLCVDLDDD. The segment at 60 to 73 is theilo; the sequence is MEWTDLPLVRDIVM. Gly-77 is lipidated: N-myristoyl glycine; by host. A disulfide bridge links Cys-501 with Cys-503. A host EIF4E binding region spans residues 1039–1045; sequence YYKQRLI. The SF3 helicase domain occupies 1281 to 1446; sequence IPLASLCEKF…CTTSNGMLDI (166 aa). 1310–1317 contacts ATP; the sequence is GAAGQGKS. Tyr-1606 is modified (O-(5'-phospho-RNA)-tyrosine). A Peptidase C3 domain is found at 1634 to 1827; the sequence is NPVMDFELFC…AATIITRELI (194 aa). Residues His-1678, Asp-1712, and Cys-1791 each act as for protease 3C activity in the active site. A RdRp catalytic domain is found at 2069 to 2187; sequence NYVYDVDYSN…GTNYQIDFNL (119 aa). Residues Asp-2075 and Asp-2173 each act as for RdRp activity in the active site.

Belongs to the picornaviruses polyprotein family. In terms of assembly, interacts with host EIF4E. Interacts with the leader protein. As to quaternary structure, interacts with host RAN; the complex L-RAN recruits cellular kinases responsible for the L-induced nucleocytoplasmic trafficking inhibition. The complex L-RAN can further bind to the host exportins XPO1/CRM1 and CSE1L/CAS. Interacts with the protein 2A. Interacts with host RNASEL; this interaction prevents RNASEL activation by its substrate 2'-5' oligoadenylates. Phosphorylated. Post-translationally, specific enzymatic cleavages by the viral protease in vivo yield a variety of precursors and mature proteins. The polyprotein seems to be cotranslationally cleaved at the 2A/2B junction by a ribosomal skip from one codon to the next without formation of a peptide bond. This process would release the P1-2A peptide from the translational complex. In terms of processing, during virion maturation, immature virions are rendered infectious following cleavage of VP0 into VP4 and VP2. This maturation seems to be an autocatalytic event triggered by the presence of RNA in the capsid and is followed by a conformational change of the particle. Uridylylated by the polymerase and is covalently linked to the 5'-end of genomic RNA. This uridylylated form acts as a nucleotide-peptide primer for the polymerase. Post-translationally, myristoylation is required during RNA encapsidation and formation of the mature virus particle.

It is found in the virion. Its subcellular location is the host cytoplasm. The protein resides in the host nucleus. The protein localises to the host nucleolus. It localises to the host cytoplasmic vesicle membrane. The catalysed reaction is RNA(n) + a ribonucleoside 5'-triphosphate = RNA(n+1) + diphosphate. It catalyses the reaction ATP + H2O = ADP + phosphate + H(+). It carries out the reaction Selective cleavage of Gln-|-Gly bond in the poliovirus polyprotein. In other picornavirus reactions Glu may be substituted for Gln, and Ser or Thr for Gly.. Forms a complex with host RAN and probably binds to exportins carrying activated MAPK in order to mediate the hyperphosphorylation of host Phe/Gly containing nuclear pore proteins (Nups) resulting in cessation of active nucleocytoplasmic transport. Proteins with NLS signals fail to import, cellular mRNAs fail to export, and some proteins small enough for diffusion are not retained anymore (efflux). The resulting inhibition of cellular protein synthesis serves to ensure maximal viral gene expression and to evade host immune response. The leader protein also inhibits host interferon regulatory factor 3 (IRF3) dimerization, thereby blocking the transcriptional activation of IFN genes. Binds to host RNase L thereby preventing its activation by 2'-5' oligoadenylates in order to counteract the antiviral interferon-inducible OAS/RNase L pathway. Its function is as follows. Forms an icosahedral capsid of pseudo T=3 symmetry with capsid proteins VP2 and VP3. Together they form an icosahedral capsid composed of 60 copies of each VP1, VP2, and VP3, with a diameter of approximately 300 Angstroms. VP4 lies on the inner surface of the protein shell formed by VP1, VP2 and VP3. All the three latter proteins contain a beta-sheet structure called beta-barrel jelly roll. VP1 is situated at the 12 fivefold axes, whereas VP2 and VP3 are located at the quasi-sixfold axes. Functionally, lies on the inner surface of the capsid shell. After binding to the host receptor, the capsid undergoes conformational changes. Capsid protein VP4 is released, capsid protein VP1 N-terminus is externalized, and together, they shape a pore in the host membrane through which the viral genome is translocated into the host cell cytoplasm. After genome has been released, the channel shrinks. In terms of biological role, VP0 precursor is a component of immature procapsids. Involved in host translation shutoff by inhibiting cap-dependent mRNA translation. Nuclear localization is required for this function. The resulting inhibition of cellular protein synthesis serves to ensure maximal viral gene expression and to evade host immune response. Inhibits the phosphorylation of the leader protein. Its function is as follows. Affects membrane integrity and causes an increase in membrane permeability. Functionally, associates with and induces structural rearrangements of intracellular membranes. It displays RNA-binding, nucleotide binding and NTPase activities. In terms of biological role, serves as membrane anchor via its hydrophobic domain. Forms a primer, VPg-pU, which is utilized by the polymerase for the initiation of RNA chains. Its function is as follows. Cysteine protease that generates mature viral proteins from the precursor polyprotein. In addition to its proteolytic activity, it binds to viral RNA, and thus influences viral genome replication. RNA and substrate cooperatively bind to the protease. Cleaves host PABP1, this cleavage is important for viral replication. Functionally, replicates the genomic and antigenomic RNAs by recognizing replications specific signals. Performs VPg uridylylation. This chain is Genome polyprotein, found in Theiler's murine encephalomyelitis virus (strain DA) (TMEV).